A 932-amino-acid polypeptide reads, in one-letter code: Phosphoenolpyruvate carboxylase (932 aa).

Catalysis depends on residues His-164 and Lys-594.

The protein belongs to the PEPCase type 1 family. Mg(2+) is required as a cofactor.

It carries out the reaction oxaloacetate + phosphate = phosphoenolpyruvate + hydrogencarbonate. Functionally, forms oxaloacetate, a four-carbon dicarboxylic acid source for the tricarboxylic acid cycle. The chain is Phosphoenolpyruvate carboxylase from Bradyrhizobium diazoefficiens (strain JCM 10833 / BCRC 13528 / IAM 13628 / NBRC 14792 / USDA 110).